A 191-amino-acid chain; its full sequence is Guanylate kinase (191 aa).

The Guanylate kinase-like domain occupies 6–184 (GLIIILSSPS…TIQQIHTIIL (179 aa)). Residue 13 to 20 (SPSGAGKS) coordinates ATP.

This sequence belongs to the guanylate kinase family.

The protein localises to the cytoplasm. It catalyses the reaction GMP + ATP = GDP + ADP. Its function is as follows. Essential for recycling GMP and indirectly, cGMP. The polypeptide is Guanylate kinase (Rickettsia bellii (strain RML369-C)).